The primary structure comprises 54 residues: Rubredoxin (54 aa).

A Rubredoxin-like domain is found at 1–54; that stretch reads MKKYVCVVCGYIYDPAEGDPDNGVNPGTSFEDIPDDWVCPLCGVGKDQFEPSEE. 4 residues coordinate Fe cation: Cys-6, Cys-9, Cys-39, and Cys-42.

Belongs to the rubredoxin family. Fe(3+) serves as cofactor.

Rubredoxin is a small nonheme, iron protein lacking acid-labile sulfide. Its single Fe, chelated to 4 Cys, functions as an electron acceptor and may also stabilize the conformation of the molecule. Functions as an intermediate component in the electron transfer chain: NADH-&gt;NROR-&gt;Rd-&gt;FprA1/2 in which Rd serves as the proximal electron donor to the FDPs that exhibit H(2)O-forming NADH oxidase activity. Also functions as the proximal electron donor to the Dfx and revRbr proteins that display superoxide reductase (SOR) and NADH peroxidase activity, respectively. Therefore, is a key electron carrier in an efficient multienzyme complex that can scavenge O(2) and reactive oxygen species (ROS), and thus plays an important role in the oxidative stress defense system in C.acetobutylicum, an obligate anaerobic bacterium. The sequence is that of Rubredoxin (rd) from Clostridium acetobutylicum (strain ATCC 824 / DSM 792 / JCM 1419 / IAM 19013 / LMG 5710 / NBRC 13948 / NRRL B-527 / VKM B-1787 / 2291 / W).